The primary structure comprises 61 residues: Small ribosomal subunit protein uS14 (61 aa).

Zn(2+) contacts are provided by C24, C27, C40, and C43.

Belongs to the universal ribosomal protein uS14 family. Zinc-binding uS14 subfamily. As to quaternary structure, part of the 30S ribosomal subunit. Contacts proteins S3 and S10. It depends on Zn(2+) as a cofactor.

Functionally, binds 16S rRNA, required for the assembly of 30S particles and may also be responsible for determining the conformation of the 16S rRNA at the A site. This is Small ribosomal subunit protein uS14 from Borreliella afzelii (strain PKo) (Borrelia afzelii).